The primary structure comprises 330 residues: NADH-quinone oxidoreductase subunit H (330 aa).

8 helical membrane-spanning segments follow: residues 11 to 31 (ILVAVLKAIVILLAVVVCGAL), 81 to 101 (FIFVLAPMIAFAAMLMAFAII), 114 to 134 (IGILFFFAMAGLSVYAVLFAG), 154 to 174 (ISYEVFLALALMGVVAQVGSF), 187 to 207 (LWFIIPQFFGFCTFFIAGVAV), 238 to 258 (FFVGEYVGIVTISALLVTLFF), 270 to 290 (QIPFFWFALKTAFFIMIFILL), and 309 to 329 (FCLPLTLINLLVTGALVLAAA).

It belongs to the complex I subunit 1 family. NDH-1 is composed of 13 different subunits. Subunits NuoA, H, J, K, L, M, N constitute the membrane sector of the complex.

It localises to the cell inner membrane. The catalysed reaction is a quinone + NADH + 5 H(+)(in) = a quinol + NAD(+) + 4 H(+)(out). Its function is as follows. NDH-1 shuttles electrons from NADH, via FMN and iron-sulfur (Fe-S) centers, to quinones in the respiratory chain. The immediate electron acceptor for the enzyme in this species is believed to be ubiquinone. Couples the redox reaction to proton translocation (for every two electrons transferred, four hydrogen ions are translocated across the cytoplasmic membrane), and thus conserves the redox energy in a proton gradient. This subunit may bind ubiquinone. This is NADH-quinone oxidoreductase subunit H from Ectopseudomonas mendocina (strain ymp) (Pseudomonas mendocina).